We begin with the raw amino-acid sequence, 267 residues long: Mannose-specific lectin 1 (267 aa).

The signal sequence occupies residues 1-26; the sequence is MAKLLLFLLPAILGLLVPPRSWSAVA. Bulb-type lectin domains follow at residues 29–134 and 148–255; these read TNYL…PSVP and NNLL…PQAK. Beta-D-mannose is bound by residues 54–58, Tyr-62, Trp-66, Gln-67, 173–177, Tyr-181, and 185–188; these read QDDCN, QGDCN, and YGWQ. A Carbohydrate-binding motif 1 motif is present at residues 54 to 62; sequence QDDCNLVLY. Disulfide bonds link Cys-57–Cys-77 and Cys-176–Cys-198. Residues 173-181 carry the Carbohydrate-binding motif 2 motif; sequence QGDCNLVLY.

Forms heterotetramer of 2 chains 1 and 2 chains 2 arranged as a dimer of chain 1 and chain 2 heterodimers.

It localises to the secreted. Its function is as follows. Mannose-specific lectin. Shows agglutinating activity towards erythrocytes from rabbit. The sequence is that of Mannose-specific lectin 1 from Colocasia esculenta (Wild taro).